A 327-amino-acid polypeptide reads, in one-letter code: RING-H2 finger protein ATL34 (327 aa).

A signal peptide spans 1–26; it reads MTIGKSPILLHHHVIFLLLLVLQVSG. The chain crosses the membrane as a helical span at residues 47-67; the sequence is AVIIAMLMFTLLFSMLACCVC. An RING-type; atypical zinc finger spans residues 128 to 170; that stretch reads CAICLNEFEDEETLRLMPPCSHAFHASCIDVWLSSRSTCPVCR. A disordered region spans residues 280 to 327; it reads LSHMKTLPQARSSREGYRSGSVGSERRGKGKEKEFGEGSFDRLKAEMV. Positions 303-327 are enriched in basic and acidic residues; sequence SERRGKGKEKEFGEGSFDRLKAEMV.

Belongs to the RING-type zinc finger family. ATL subfamily.

The protein resides in the membrane. The catalysed reaction is S-ubiquitinyl-[E2 ubiquitin-conjugating enzyme]-L-cysteine + [acceptor protein]-L-lysine = [E2 ubiquitin-conjugating enzyme]-L-cysteine + N(6)-ubiquitinyl-[acceptor protein]-L-lysine.. It participates in protein modification; protein ubiquitination. This Arabidopsis thaliana (Mouse-ear cress) protein is RING-H2 finger protein ATL34 (ATL34).